Consider the following 650-residue polypeptide: Acetyl-coenzyme A synthetase (650 aa).

Residues 191-194 (RAGR), Thr311, and Asn335 each bind CoA. ATP is bound by residues 387 to 389 (GEP), 411 to 416 (DTWWQT), Asp500, and Arg515. Residue Ser523 participates in CoA binding. An ATP-binding site is contributed by Arg526. The Mg(2+) site is built by Val537, His539, and Val542. Arg584 lines the CoA pocket. Lys609 is modified (N6-acetyllysine).

It belongs to the ATP-dependent AMP-binding enzyme family. The cofactor is Mg(2+). Acetylated. Deacetylation by the SIR2-homolog deacetylase activates the enzyme.

The enzyme catalyses acetate + ATP + CoA = acetyl-CoA + AMP + diphosphate. Its function is as follows. Catalyzes the conversion of acetate into acetyl-CoA (AcCoA), an essential intermediate at the junction of anabolic and catabolic pathways. AcsA undergoes a two-step reaction. In the first half reaction, AcsA combines acetate with ATP to form acetyl-adenylate (AcAMP) intermediate. In the second half reaction, it can then transfer the acetyl group from AcAMP to the sulfhydryl group of CoA, forming the product AcCoA. The sequence is that of Acetyl-coenzyme A synthetase from Shewanella halifaxensis (strain HAW-EB4).